Here is a 283-residue protein sequence, read N- to C-terminus: MKVKVIPVLEDNYMYLIIEEHTREAVAIDVAVAERLLEIAGREGVSLTMVLSTHHHWDHTRGNAELAHILPGLAVLGADERICALTRRLEHGEGLQFGAIHVRCLLTPGHTSGHMSYFLWEDDCPDSPALFSGDALSVAGCGWHLEDTAQQMYQSLAKTLGTLPPETKVFCGHEHTLSNLEFAQKVEPCNEHVQAKLSWAQERDDEDIPTVPSTLGEELMYNPFLRVTEDAVRAFTGQVAPAQVLEALCRERARFQPAVEPPQPQVRALLALQWGLLSTHQKK.

Positions 54, 56, 58, 59, 110, 134, and 173 each coordinate Zn(2+).

It belongs to the metallo-beta-lactamase superfamily. Glyoxalase II family. Zn(2+) is required as a cofactor.

In terms of biological role, hydrolase acting on ester bonds. This is Hydroxyacylglutathione hydrolase-like protein (Haghl) from Mus musculus (Mouse).